We begin with the raw amino-acid sequence, 989 residues long: Phosphoenolpyruvate carboxylase (989 aa).

Active-site residues include His-175 and Lys-630.

The protein belongs to the PEPCase type 1 family. Requires Mg(2+) as cofactor.

The enzyme catalyses oxaloacetate + phosphate = phosphoenolpyruvate + hydrogencarbonate. Its function is as follows. Forms oxaloacetate, a four-carbon dicarboxylic acid source for the tricarboxylic acid cycle. This is Phosphoenolpyruvate carboxylase from Prochlorococcus marinus (strain MIT 9312).